Consider the following 105-residue polypeptide: Small ribosomal subunit protein uS10 (105 aa).

It belongs to the universal ribosomal protein uS10 family. In terms of assembly, part of the 30S ribosomal subunit.

Functionally, involved in the binding of tRNA to the ribosomes. The polypeptide is Small ribosomal subunit protein uS10 (Acaryochloris marina (strain MBIC 11017)).